A 429-amino-acid polypeptide reads, in one-letter code: MTEIINVTAREILDSRGNPTIEVEVAVGTGDVGRAAVPSGASTGEHEALELRDGDKGRYLGKGVRKAIANVMDEIAPAVVGLDAGDQAVLDQRMIELDGTATKSKLGANAILGVSLAAAKAAAQAHGLPLYRYVGGAGARTLPVPLMNILNGGAHADSNVDIQEFMVVPLGAPSFAEALRYGAEVFHALKAVLKKKGAGTGVGDEGGYAPNLASNEEALALIMKAIEQAGLKAGDDVGLALDCAASEFFEKSSGKYDLEGEGKAFDGKGLVDFYASLAAKYPIVSIEDGCAEDDWATWKLLTERLGSKLQLVGDDLFVTNVTRLSRGIAEGVANSILVKVNQIGSLTETLEAVRMAHRAGYTSVMSHRSGETEDTTIADLSVACDCGQIKTGSASRTDRVAKYNQLLRIEEELGKAARYAGRDAFRALR.

Glutamine 163 lines the (2R)-2-phosphoglycerate pocket. The Proton donor role is filled by glutamate 205. Positions 242, 287, and 314 each coordinate Mg(2+). Residues lysine 339, arginine 368, serine 369, and lysine 390 each coordinate (2R)-2-phosphoglycerate. Lysine 339 (proton acceptor) is an active-site residue.

Belongs to the enolase family. Requires Mg(2+) as cofactor.

The protein resides in the cytoplasm. It localises to the secreted. It is found in the cell surface. It carries out the reaction (2R)-2-phosphoglycerate = phosphoenolpyruvate + H2O. Its pathway is carbohydrate degradation; glycolysis; pyruvate from D-glyceraldehyde 3-phosphate: step 4/5. Its function is as follows. Catalyzes the reversible conversion of 2-phosphoglycerate (2-PG) into phosphoenolpyruvate (PEP). It is essential for the degradation of carbohydrates via glycolysis. The chain is Enolase from Anaeromyxobacter sp. (strain Fw109-5).